The following is a 465-amino-acid chain: Alpha-2A adrenergic receptor (465 aa).

Residues 1–48 (MFRQEQPLAEGSFAPMGSLQPDAGNSSWNGTEAPGGGTRATPYSLQVT) are Extracellular-facing. Asn-25 and Asn-29 each carry an N-linked (GlcNAc...) asparagine glycan. The chain crosses the membrane as a helical span at residues 49–74 (LTLVCLAGLLMLFTVFGNVLVIIAVF). Over 75 to 85 (TSRALKAPQNL) the chain is Cytoplasmic. A helical membrane pass occupies residues 86-111 (FLVSLASADILVATLVIPFSLANEVM). The Extracellular segment spans residues 112 to 121 (GYWYFGKVWC). Residues Cys-121 and Cys-203 are joined by a disulfide bond. Residues 122 to 144 (EIYLALDVLFCTSSIVHLCAISL) form a helical membrane-spanning segment. The Cytoplasmic portion of the chain corresponds to 145–164 (DRYWSITQAIEYNLKRTPRR). A helical transmembrane segment spans residues 165 to 188 (IKAIIVTVWVISAVISFPPLISIE). The Extracellular segment spans residues 189 to 207 (KKGAGGGQQPAEPSCKIND). Residues 208–232 (QKWYVISSSIGSFFAPCLIMILVYV) traverse the membrane as a helical segment. The Cytoplasmic portion of the chain corresponds to 233-389 (RIYQIAKRRT…RQNREKRFTF (157 aa)). The disordered stretch occupies residues 242 to 377 (TRVPPSRRGP…RAGGAKASRW (136 aa)). The segment covering 313 to 330 (SSEHAERPQGPGKPERGP) has biased composition (basic and acidic residues). A Phosphoserine modification is found at Ser-346. Residues 353-364 (GAAGPGASGSGQ) are compositionally biased toward gly residues. Arg-368 bears the Omega-N-methylarginine mark. The helical transmembrane segment at 390–414 (VLAVVIGVFVVCWFPFFFTYTLIAV) threads the bilayer. The Extracellular portion of the chain corresponds to 415–424 (GCPVPYQLFN). A helical transmembrane segment spans residues 425-445 (FFFWFGYCNSSLNPVIYTIFN). The Cytoplasmic segment spans residues 446–465 (HDFRRAFKKILCRGDRKRIV). A lipid anchor (S-palmitoyl cysteine) is attached at Cys-457.

It belongs to the G-protein coupled receptor 1 family. Adrenergic receptor subfamily. ADRA2A sub-subfamily. In terms of tissue distribution, expressed in brain.

The protein localises to the cell membrane. In terms of biological role, alpha-2 adrenergic receptors mediate the catecholamine-induced inhibition of adenylate cyclase through the action of G proteins. The polypeptide is Alpha-2A adrenergic receptor (Rattus norvegicus (Rat)).